A 306-amino-acid chain; its full sequence is Leucotoxin LukEv (306 aa).

The signal sequence occupies residues 1–23 (MLAATLSVGLIAPLASPIQESRA).

The protein belongs to the aerolysin family. In terms of assembly, toxicity requires sequential binding and synergistic association of a class S and a class F component which form heterooligomeric complexes. LukEv (class S) associates with LukDv (class F).

It is found in the secreted. Its function is as follows. Part of a bi-component leucotoxin that acts by forming pores in the membrane of the target cells. The activity of LukEv-LukDv to rabbit leukocytes is similar to that of the Panton-Valentine leucocidin (PVL). LukEv-LukDv is hemolytic to rabbit red blood cells although the activity is only 8% of gamma-hemolysin. This is Leucotoxin LukEv (lukEv) from Staphylococcus aureus (strain NCTC 8325 / PS 47).